An 87-amino-acid polypeptide reads, in one-letter code: Potassium channel toxin Ttr-beta-KTx (87 aa).

An N-terminal signal peptide occupies residues 1–19 (MERKWALLLFLGMVTLVSC). Positions 20–27 (GLREKHVQ) are excised as a propeptide. The BetaSPN-type CS-alpha/beta domain occupies 53-87 (QFGCPAYEGYCNNHCQDIKRKDGECHGFKCKCAKD). 3 cysteine pairs are disulfide-bonded: Cys-56–Cys-77, Cys-63–Cys-82, and Cys-67–Cys-84.

Belongs to the long chain scorpion toxin family. Class 1 subfamily. Expressed by the venom gland.

The protein localises to the secreted. Functionally, inhibits voltage-gated potassium channel. The chain is Potassium channel toxin Ttr-beta-KTx from Tityus trivittatus (Argentinean scorpion).